Consider the following 330-residue polypeptide: AP-1-like transcription factor YAP3 (330 aa).

The segment at 114–150 (SYSNTNYFSKNNGISPSSRSPSVAHNENVPDDSKAKK) is disordered. Over residues 121–138 (FSKNNGISPSSRSPSVAH) the composition is skewed to polar residues. Residue Ser135 is modified to Phosphoserine. A bZIP domain is found at 144 to 207 (DDSKAKKKAQ…TEINAENRLL (64 aa)). Residues 147 to 168 (KAKKKAQNRAAQKAFRERKEAR) form a basic motif region. Positions 172 to 207 (LQDKLLESERNRQSLLKEIEELRKANTEINAENRLL) are leucine-zipper.

This sequence belongs to the bZIP family. YAP subfamily. As to quaternary structure, homodimer. Interacts with the C-terminal, cytoplasmic tail of the multidrug resistance ABC transporter PDR5.

The protein resides in the cytoplasm. It is found in the nucleus. In terms of biological role, transcription activator involved in the regulation of genes expressed in response to environmental changes. When overexpressed it activates transcription of the multidrug resistance ABC transporter PDR5, thus conferring resistance to the fungicide fluconazole (FCZ) and cycloheximide. When overexpressed, it also confers, independent of PDR5, increased resistance to 4-nitroquinoline-N-oxide (4-NQO). Preferentially binds 5'-TTACTAA-3'. This Saccharomyces cerevisiae (strain ATCC 204508 / S288c) (Baker's yeast) protein is AP-1-like transcription factor YAP3 (YAP3).